The sequence spans 99 residues: Transcription and mRNA export factor SUS1 (99 aa).

This sequence belongs to the ENY2 family. As to quaternary structure, component of the nuclear pore complex (NPC)-associated TREX-2 complex (transcription and export complex 2), composed of at least SUS1, SAC3, THP1, SEM1, and CDC31. TREX-2 contains 2 SUS1 chains. The TREX-2 complex interacts with the nucleoporin NUP1. Component of the 1.8 MDa SAGA transcription coactivator-HAT complex. SAGA is built of 5 distinct domains with specialized functions. Within the SAGA complex, SUS1, SGF11, SGF73 and UBP8 form an additional subcomplex of SAGA called the DUB module (deubiquitination module). Interacts directly with THP1, SAC3, SGF11, and with the RNA polymerase II.

It is found in the nucleus. The protein localises to the nucleoplasm. The protein resides in the cytoplasm. Its subcellular location is the P-body. In terms of biological role, involved in mRNA export coupled transcription activation by association with both the TREX-2 and the SAGA complexes. At the promoters, SAGA is required for recruitment of the basal transcription machinery. It influences RNA polymerase II transcriptional activity through different activities such as TBP interaction and promoter selectivity, interaction with transcription activators, and chromatin modification through histone acetylation and deubiquitination. Within the SAGA complex, participates in a subcomplex required for deubiquitination of H2B and for the maintenance of steady-state H3 methylation levels. The TREX-2 complex functions in docking export-competent ribonucleoprotein particles (mRNPs) to the nuclear entrance of the nuclear pore complex (nuclear basket). TREX-2 participates in mRNA export and accurate chromatin positioning in the nucleus by tethering genes to the nuclear periphery. May also be involved in cytoplasmic mRNA decay by interaction with components of P-bodies. The polypeptide is Transcription and mRNA export factor SUS1 (Eremothecium gossypii (strain ATCC 10895 / CBS 109.51 / FGSC 9923 / NRRL Y-1056) (Yeast)).